Reading from the N-terminus, the 161-residue chain is Phosphopantetheine adenylyltransferase (161 aa).

Ser9 provides a ligand contact to substrate. Residues Ser9–Phe10 and His17 contribute to the ATP site. Positions 41, 73, and 87 each coordinate substrate. Residues Gly88–Arg90, Glu98, and Tyr122–Ser128 contribute to the ATP site.

It belongs to the bacterial CoaD family. Homohexamer. Mg(2+) serves as cofactor.

Its subcellular location is the cytoplasm. It catalyses the reaction (R)-4'-phosphopantetheine + ATP + H(+) = 3'-dephospho-CoA + diphosphate. Its pathway is cofactor biosynthesis; coenzyme A biosynthesis; CoA from (R)-pantothenate: step 4/5. Its function is as follows. Reversibly transfers an adenylyl group from ATP to 4'-phosphopantetheine, yielding dephospho-CoA (dPCoA) and pyrophosphate. The protein is Phosphopantetheine adenylyltransferase of Mycobacterium bovis (strain ATCC BAA-935 / AF2122/97).